Reading from the N-terminus, the 215-residue chain is Nascent polypeptide-associated complex subunit alpha (215 aa).

The tract at residues 1–82 (MPGEATETVP…EKKARKAMSK (82 aa)) is disordered. Over residues 9–28 (VPVTEQEMQQPQAETGSGTE) the composition is skewed to polar residues. The span at 29 to 42 (SDSDESVPDLEEGD) shows a compositional bias: acidic residues. Residues 44 to 57 (AQTQTQQAQLAAAA) are compositionally biased toward low complexity. The NAC-A/B domain occupies 70-135 (SRSEKKARKA…AKIEDLSQQA (66 aa)). The residue at position 166 (Ser166) is a Phosphoserine. A UBA domain is found at 176–213 (VEVKDIELVMSQANVSRAKAVRALKNNNNDIVNAIMEL).

It belongs to the NAC-alpha family.

Its function is as follows. May promote appropriate targeting of ribosome-nascent polypeptide complexes. In Danio rerio (Zebrafish), this protein is Nascent polypeptide-associated complex subunit alpha (naca).